A 277-amino-acid polypeptide reads, in one-letter code: Digeranylgeranylglyceryl phosphate synthase (277 aa).

7 helical membrane-spanning segments follow: residues 16-36, 40-60, 101-121, 129-149, 153-173, 205-225, and 257-277; these read ILAG…IPSI, GLVF…NDYF, FLGV…FIYA, FIGN…GALG, VGLA…REIM, IFGV…IGLG, and LKIA…TKGV.

This sequence belongs to the UbiA prenyltransferase family. DGGGP synthase subfamily. Mg(2+) is required as a cofactor.

It localises to the cell membrane. It catalyses the reaction sn-3-O-(geranylgeranyl)glycerol 1-phosphate + (2E,6E,10E)-geranylgeranyl diphosphate = 2,3-bis-O-(geranylgeranyl)-sn-glycerol 1-phosphate + diphosphate. The protein operates within membrane lipid metabolism; glycerophospholipid metabolism. Its function is as follows. Prenyltransferase that catalyzes the transfer of the geranylgeranyl moiety of geranylgeranyl diphosphate (GGPP) to the C2 hydroxyl of (S)-3-O-geranylgeranylglyceryl phosphate (GGGP). This reaction is the second ether-bond-formation step in the biosynthesis of archaeal membrane lipids. The sequence is that of Digeranylgeranylglyceryl phosphate synthase from Pyrococcus abyssi (strain GE5 / Orsay).